The sequence spans 410 residues: Multidrug resistance protein MdtA (410 aa).

A signal peptide spans 1–21 (MNNRYPVMKKGLIVLVVIAVA). Residues 36–56 (SDGDLSGQSAHGKRGNGAHKP) form a disordered region.

The protein belongs to the membrane fusion protein (MFP) (TC 8.A.1) family. Part of a tripartite efflux system composed of MdtA, MdtB and MdtC.

It is found in the cell inner membrane. The protein is Multidrug resistance protein MdtA of Pantoea ananatis (strain AJ13355).